The chain runs to 799 residues: MPERLAETLLDLWTPLIILWITLPSFVYMAPMNQAHVLTTGSPLELSRQSEEMRILNRSKRGWVWNQMFVLEEFSGPEPILVGRLHTDLDPGSKKIKYILSGDGAGTIFQINDITGDIHAIKRLDREEKAEYTLTAQAVDWETNKPLEPPSEFIIKVQDINDNAPEFLNGPYHATVPEMSILGTSVTNVTATDADDPVYGNSAKLVYSILEGQPYFSIEPETAIIKTALPNMDREAKEEYLVVIQAKDMGGHSGGLSGTTTLTVTLTDVNDNPPKFAQSLYHFSVPEDVVLGTAIGRVKANDQDIGENAQSSYDIIDGDGTALFEITSDAQAQDGVIRLRKPLDFETKKSYTLKVEAANIHIDPRFSGRGPFKDTATVKIVVEDADEPPVFSSPTYLLEVHENAALNSVIGQVTARDPDITSSPIRFSIDRHTDLERQFNINADDGKITLATPLDRELSVWHNISIIATEIRNHSQISRVPVAIKVLDVNDNAPEFASEYEAFLCENGKPGQVIQTVSAMDKDDPKNGHFFLYSLLPEMVNNPNFTIKKNEDNSLSILAKHNGFNRQKQEVYLLPIVISDSGNPPLSSTSTLTIRVCGCSNDGVVQSCNVEPYVLPIGLSMGALIAILACIILLLVIVVLFVTLRRHKNEPLIIKDDEDVRENIIRYDDEGGGEEDTEAFDIATLQNPDGINGFLPRKDIKPDLQFMPRQGLAPVPNGVDVDEFINVRLHEADNDPTAPPYDSIQIYGYEGRGSVAGSLSSLESTTSDSDQNFDYLSDWGPRFKRLGELYSVGESDKET.

The first 29 residues, 1–29 (MPERLAETLLDLWTPLIILWITLPSFVYM), serve as a signal peptide directing secretion. A propeptide spanning residues 30-61 (APMNQAHVLTTGSPLELSRQSEEMRILNRSKR) is cleaved from the precursor. Cadherin domains follow at residues 62–167 (GWVW…APEF), 168–276 (LNGP…PPKF), 277–391 (AQSL…PPVF), 392–494 (SSPT…DNAP), and 495–616 (EFAS…YVLP). At 62 to 621 (GWVWNQMFVL…PYVLPIGLSM (560 aa)) the chain is on the extracellular side. Asn188 carries N-linked (GlcNAc...) asparagine glycosylation. N-linked (GlcNAc...) asparagine glycans are attached at residues Asn463, Asn473, and Asn544. A helical transmembrane segment spans residues 622 to 642 (GALIAILACIILLLVIVVLFV). The Cytoplasmic portion of the chain corresponds to 643–799 (TLRRHKNEPL…YSVGESDKET (157 aa)). Ser795 is subject to Phosphoserine.

Its subcellular location is the cell membrane. Its function is as follows. Cadherins are calcium-dependent cell adhesion proteins. They preferentially interact with themselves in a homophilic manner in connecting cells; cadherins may thus contribute to the sorting of heterogeneous cell types. The sequence is that of Cadherin-8 (Cdh8) from Rattus norvegicus (Rat).